The following is a 487-amino-acid chain: Benzaldehyde dehydrogenase [NAD(+)] (487 aa).

Gly232–Gly237 serves as a coordination point for NAD(+). Active-site residues include Glu254 and Cys288.

This sequence belongs to the aldehyde dehydrogenase family. Homotetramer.

The catalysed reaction is benzaldehyde + NAD(+) + H2O = benzoate + NADH + 2 H(+). This Pseudomonas putida (Arthrobacter siderocapsulatus) protein is Benzaldehyde dehydrogenase [NAD(+)] (xylC).